Here is a 25-residue protein sequence, read N- to C-terminus: Cysteine-rich venom protein 25 (25 aa).

The segment at 1–25 (NVDFNSESTRRKKKQKEIVDLXNSL) is disordered.

This sequence belongs to the CRISP family. Post-translationally, contains 8 disulfide bonds. In terms of tissue distribution, expressed by the venom gland.

The protein resides in the secreted. This chain is Cysteine-rich venom protein 25, found in Naja haje haje (Egyptian cobra).